A 114-amino-acid chain; its full sequence is T cell receptor beta variable 5-5 (114 aa).

The N-terminal stretch at 1-21 (MGPGLLCWVLLCLLGAGPVDA) is a signal peptide. The 93-residue stretch at 22-114 (GVTQSPTHLI…SALYLCASSL (93 aa)) folds into the Ig-like domain. Cys42 and Cys110 are disulfide-bonded. Residue Asn90 is glycosylated (N-linked (GlcNAc...) asparagine).

As to quaternary structure, alpha-beta TR is a heterodimer composed of an alpha and beta chain; disulfide-linked. The alpha-beta TR is associated with the transmembrane signaling CD3 coreceptor proteins to form the TR-CD3 (TcR or TCR). The assembly of alpha-beta TR heterodimers with CD3 occurs in the endoplasmic reticulum where a single alpha-beta TR heterodimer associates with one CD3D-CD3E heterodimer, one CD3G-CD3E heterodimer and one CD247 homodimer forming a stable octameric structure. CD3D-CD3E and CD3G-CD3E heterodimers preferentially associate with TR alpha and TR beta chains, respectively. The association of the CD247 homodimer is the last step of TcR assembly in the endoplasmic reticulum and is required for transport to the cell surface.

The protein localises to the cell membrane. In terms of biological role, v region of the variable domain of T cell receptor (TR) beta chain that participates in the antigen recognition. Alpha-beta T cell receptors are antigen specific receptors which are essential to the immune response and are present on the cell surface of T lymphocytes. Recognize peptide-major histocompatibility (MH) (pMH) complexes that are displayed by antigen presenting cells (APC), a prerequisite for efficient T cell adaptive immunity against pathogens. Binding of alpha-beta TR to pMH complex initiates TR-CD3 clustering on the cell surface and intracellular activation of LCK that phosphorylates the ITAM motifs of CD3G, CD3D, CD3E and CD247 enabling the recruitment of ZAP70. In turn ZAP70 phosphorylates LAT, which recruits numerous signaling molecules to form the LAT signalosome. The LAT signalosome propagates signal branching to three major signaling pathways, the calcium, the mitogen-activated protein kinase (MAPK) kinase and the nuclear factor NF-kappa-B (NF-kB) pathways, leading to the mobilization of transcription factors that are critical for gene expression and essential for T cell growth and differentiation. The T cell repertoire is generated in the thymus, by V-(D)-J rearrangement. This repertoire is then shaped by intrathymic selection events to generate a peripheral T cell pool of self-MH restricted, non-autoaggressive T cells. Post-thymic interaction of alpha-beta TR with the pMH complexes shapes TR structural and functional avidity. The sequence is that of T cell receptor beta variable 5-5 from Homo sapiens (Human).